Here is a 136-residue protein sequence, read N- to C-terminus: Snaclec rhodocytin subunit alpha (136 aa).

Intrachain disulfides connect cysteine 5–cysteine 16, cysteine 33–cysteine 131, and cysteine 106–cysteine 123. A C-type lectin domain is found at 12-132; sequence YDQHCYQAFN…CEQMHAFVCK (121 aa).

It belongs to the snaclec family. Dimer (non-covalently linked) of heterodimers of subunits alpha and beta (disulfide-linked). As to expression, expressed by the venom gland.

Its subcellular location is the secreted. Elicits platelet aggregation by the binding to the C-type lectin domain family 1 member B (CLEC1B/CLEC2). Binding leads to tyrosine phosphorylation in the cytoplasmic tail of CLEC1B, which promotes the binding of spleen tyrosine kinase (Syk), subsequent activation of PLC-gamma-2, and platelet activation and aggregation. Binding to GPIbalpha (GP1BA) and alpha-2/beta-1 (ITGA2/ITGB1) may also induce aggregation, but this is controversial. This Calloselasma rhodostoma (Malayan pit viper) protein is Snaclec rhodocytin subunit alpha.